A 590-amino-acid polypeptide reads, in one-letter code: J protein JJJ1 (590 aa).

The region spanning Thr3 to Gln72 is the J domain. Residues Glu269 to Asn284 show a composition bias toward basic and acidic residues. The interval Glu269–Asn293 is disordered. The C2H2-type 1 zinc finger occupies Tyr338–His362. Ser393 carries the phosphoserine modification. Residues Glu441–Ser546 are disordered. A compositionally biased stretch (basic residues) spans Thr455–Ala467. Positions Asp480–Glu489 are enriched in basic and acidic residues. Phosphothreonine is present on Thr504. Residues Lys513–Lys527 show a composition bias toward basic residues. The segment covering Ser528–Ser546 has biased composition (low complexity). The C2H2-type 2 zinc finger occupies Glu549 to His573.

It is found in the nucleus. The polypeptide is J protein JJJ1 (JJJ1) (Saccharomyces cerevisiae (strain ATCC 204508 / S288c) (Baker's yeast)).